A 191-amino-acid polypeptide reads, in one-letter code: CASP-like protein 2U3 (191 aa).

Residues 1–25 (MGAYDGAEAPRAAPASTAANSRPSR) are Cytoplasmic-facing. A helical transmembrane segment spans residues 26–46 (LLLLHSLLLRLVAVVVSILVI). Topologically, residues 47 to 68 (AVMVHAKQRVMIFKAEWDNSKA) are extracellular. The helical transmembrane segment at 69–89 (FVALVAISAICLGYSFLQFIL) threads the bilayer. Over 90-114 (SAFHLCSKSWKSPTKCWAWMNFIAD) the chain is Cytoplasmic. A helical membrane pass occupies residues 115 to 135 (QILTYAMLGAAAAAAELAYIA). The Extracellular portion of the chain corresponds to 136–157 (KNGSSRAQWQPICSTFNTFCTR). A glycan (N-linked (GlcNAc...) asparagine) is linked at N137. Residues 158–178 (AGASIILSFIAVLALANSSAI) traverse the membrane as a helical segment. The Cytoplasmic segment spans residues 179–191 (SAYHLFRRPSSSV).

It belongs to the Casparian strip membrane proteins (CASP) family. In terms of assembly, homodimer and heterodimers.

The protein localises to the cell membrane. In Selaginella moellendorffii (Spikemoss), this protein is CASP-like protein 2U3.